The following is a 481-amino-acid chain: MRMSLQAPRRLLELAGQSLLGDQALAISILDELPRELFPPLFVEAFTSRRCEVLKVMVQAWPFPCLPLGSLMKTPDLEILHYVVDGIDCLLAQKVRPRRWKLQVLELRDVDENFWTIWSGARPLSCSPEAMSKRQTVEDCPRTGEKQPLKVFMDVCLKEKFMDEDLSFFSGWVQHRRGSVHLCCTKVVNYSMSILNFRNILETVYPDSIQVLEIWNMCWPCMIVEFSRYLSQMRNLRKLFISDGCRYLLSSDSQEQLVAEFSSVLLRLEYLQMLYVRRVCFFRGHLDQLIRCLRSPLETLALTYGFLEKVDLKCLPRYPSLSQLKQLNLSHGALRFIRLEPLRALLEKVAATLQTLFLVDCGIRDSKLRVILPALSCCSNLTTFCFHGNDTSMDGLKDLLRHTGRLSNLSLETYPAPRESLDDRGRVISELLTPLQAELMRILREVREPKRIFFGPVSCPCCGTSPTEQLEFNFCLWGRPA.

The LRR 1; degenerate repeat unit spans residues 99–126 (RWKLQVLELRDVDENFWTIWSGARPLSC). One copy of the LRR 2; degenerate repeat lies at 181 to 205 (HLCCTKVVNYSMSILNFRNILETVY). An LRR 3; degenerate repeat occupies 206-232 (PDSIQVLEIWNMCWPCMIVEFSRYLSQ). One copy of the LRR 4; degenerate repeat lies at 233 to 267 (MRNLRKLFISDGCRYLLSSDSQEQLVAEFSSVLLR). LRR repeat units follow at residues 268–293 (LEYLQMLYVRRVCFFRGHLDQLIRCL), 294–325 (RSPLETLALTYGFLEKVDLKCLPRYPSLSQLK), 326–344 (QLNLSHGALRFIRLEPLRA), 350–377 (AATLQTLFLVDCGIRDSKLRVILPALSC), and 378–402 (CSNLTTFCFHGNDTSMDGLKDLLRH).

The protein belongs to the PRAME family.

The sequence is that of PRAME family member 22 from Homo sapiens (Human).